Consider the following 380-residue polypeptide: Erythronate-4-phosphate dehydrogenase (380 aa).

2 residues coordinate substrate: Ser-45 and Thr-66. Residue Asp-146 participates in NAD(+) binding. Arg-207 is a catalytic residue. Residue Asp-232 coordinates NAD(+). Glu-237 is an active-site residue. The active-site Proton donor is His-254. Position 257 (Gly-257) interacts with NAD(+). Position 258 (Tyr-258) interacts with substrate.

The protein belongs to the D-isomer specific 2-hydroxyacid dehydrogenase family. PdxB subfamily. As to quaternary structure, homodimer.

It is found in the cytoplasm. It carries out the reaction 4-phospho-D-erythronate + NAD(+) = (R)-3-hydroxy-2-oxo-4-phosphooxybutanoate + NADH + H(+). It functions in the pathway cofactor biosynthesis; pyridoxine 5'-phosphate biosynthesis; pyridoxine 5'-phosphate from D-erythrose 4-phosphate: step 2/5. Catalyzes the oxidation of erythronate-4-phosphate to 3-hydroxy-2-oxo-4-phosphonooxybutanoate. The sequence is that of Erythronate-4-phosphate dehydrogenase from Marinomonas sp. (strain MWYL1).